Here is a 257-residue protein sequence, read N- to C-terminus: uncharacterized protein (257 aa).

A helical transmembrane segment spans residues 6–26 (IFWLNLAAIIIISIVVSGGMF).

It belongs to the staphylococcal tandem lipoprotein family.

It is found in the cell membrane. This is an uncharacterized protein from Staphylococcus aureus (strain Mu50 / ATCC 700699).